A 463-amino-acid polypeptide reads, in one-letter code: L-seryl-tRNA(Sec) selenium transferase (463 aa).

Lys-295 carries the post-translational modification N6-(pyridoxal phosphate)lysine.

This sequence belongs to the SelA family. Homodecamer; pentamer of dimers. Binds only one seryl-tRNA(Sec) per dimer. Requires pyridoxal 5'-phosphate as cofactor.

Its subcellular location is the cytoplasm. It catalyses the reaction L-seryl-tRNA(Sec) + selenophosphate + H(+) = L-selenocysteinyl-tRNA(Sec) + phosphate. The protein operates within aminoacyl-tRNA biosynthesis; selenocysteinyl-tRNA(Sec) biosynthesis; selenocysteinyl-tRNA(Sec) from L-seryl-tRNA(Sec) (bacterial route): step 1/1. Converts seryl-tRNA(Sec) to selenocysteinyl-tRNA(Sec) required for selenoprotein biosynthesis. This Salmonella paratyphi A (strain AKU_12601) protein is L-seryl-tRNA(Sec) selenium transferase.